Here is a 123-residue protein sequence, read N- to C-terminus: rRNA-processing protein cgr-1 (123 aa).

The span at 1 to 13 shows a compositional bias: low complexity; the sequence is MSSTTTTTQTTSQ. 2 disordered regions span residues 1 to 47 and 85 to 123; these read MSST…GLTS and EKRAKKEEKERYEKMAEKMHKKRVERLKRKEKRNKLINS. Residues 49 to 110 adopt a coiled-coil conformation; that stretch reads EKRAKERQLL…EKMHKKRVER (62 aa). Basic and acidic residues predominate over residues 85-102; it reads EKRAKKEEKERYEKMAEK. The span at 103 to 123 shows a compositional bias: basic residues; that stretch reads MHKKRVERLKRKEKRNKLINS.

It belongs to the CGR1 family.

It localises to the nucleus. It is found in the nucleolus. In terms of biological role, involved in nucleolar integrity and required for processing of the pre-rRNA for the 60S ribosome subunit. In Neurospora crassa (strain ATCC 24698 / 74-OR23-1A / CBS 708.71 / DSM 1257 / FGSC 987), this protein is rRNA-processing protein cgr-1 (cgr-1).